Consider the following 124-residue polypeptide: Fluoride-specific ion channel FluC (124 aa).

Transmembrane regions (helical) follow at residues 4–24, 35–55, 60–80, and 102–122; these read LLLV…ISIF, FGTL…YALG, ISPE…TTFS, and VVLN…LVFS. Na(+) contacts are provided by glycine 74 and threonine 77.

Belongs to the fluoride channel Fluc/FEX (TC 1.A.43) family.

The protein resides in the cell inner membrane. The enzyme catalyses fluoride(in) = fluoride(out). Na(+) is not transported, but it plays an essential structural role and its presence is essential for fluoride channel function. Fluoride-specific ion channel. Important for reducing fluoride concentration in the cell, thus reducing its toxicity. This Shewanella baltica (strain OS185) protein is Fluoride-specific ion channel FluC.